Reading from the N-terminus, the 662-residue chain is A-kinase anchor protein 10, mitochondrial (662 aa).

A mitochondrion-targeting transit peptide spans 1–28 (MRGAGPSPRQSPRTLRPDPGPAMSFFRR). The segment at 1–55 (MRGAGPSPRQSPRTLRPDPGPAMSFFRRKVKGKEQEKTSDVKSIKASISVHSPQK) is disordered. Over residues 32 to 43 (GKEQEKTSDVKS) the composition is skewed to basic and acidic residues. A phosphoserine mark is found at Ser52 and Ser189. RGS domains lie at 125-369 (TLEQ…CKYQ) and 379-505 (YLAD…YKYL). Positions 261–280 (SMETQESSSTLTVASRNSPA) are enriched in polar residues. A disordered region spans residues 261 to 282 (SMETQESSSTLTVASRNSPASP). Ser281 carries the phosphoserine modification. Residues 524–548 (LTAPGSVGPPDESHPGSSDSSASQS) are disordered. Positions 634–647 (LAWKIAKMIVSDIM) are PKA-RII subunit binding.

It localises to the mitochondrion. The protein resides in the membrane. The protein localises to the cytoplasm. In terms of biological role, differentially targeted protein that binds to type I and II regulatory subunits of protein kinase A and anchors them to the mitochondria or the plasma membrane. Although the physiological relevance between PKA and AKAPS with mitochondria is not fully understood, one idea is that BAD, a proapoptotic member, is phosphorylated and inactivated by mitochondria-anchored PKA. It cannot be excluded too that it may facilitate PKA as well as G protein signal transduction, by acting as an adapter for assembling multiprotein complexes. With its RGS domain, it could lead to the interaction to G-alpha proteins, providing a link between the signaling machinery and the downstream kinase. The sequence is that of A-kinase anchor protein 10, mitochondrial (AKAP10) from Homo sapiens (Human).